Here is a 294-residue protein sequence, read N- to C-terminus: Putative isocitrate dehydrogenase [NAD] subunit-like 4 (294 aa).

Belongs to the isocitrate and isopropylmalate dehydrogenases family.

In terms of biological role, performs an essential role in the oxidative function of the citric acid cycle. The protein is Putative isocitrate dehydrogenase [NAD] subunit-like 4 (IDH4) of Arabidopsis thaliana (Mouse-ear cress).